The chain runs to 244 residues: 14-3-3 protein beta/alpha-1 (244 aa).

The residue at position 1 (M1) is an N-acetylmethionine.

The protein belongs to the 14-3-3 family. As to quaternary structure, homodimer, and heterodimer with other family members. In terms of tissue distribution, expressed in brain, gill, heart, intestine, kidney, liver, ovary, skin, spleen and testis.

Its subcellular location is the cytoplasm. Functionally, adapter protein implicated in the regulation of a large spectrum of both general and specialized signaling pathways. Binds to a large number of partners, usually by recognition of a phosphoserine or phosphothreonine motif. Binding generally results in the modulation of the activity of the binding partner. The chain is 14-3-3 protein beta/alpha-1 from Oncorhynchus mykiss (Rainbow trout).